Consider the following 814-residue polypeptide: Probable G-protein coupled receptor 156 (814 aa).

Residues 1 to 47 lie on the Extracellular side of the membrane; the sequence is MEPEINCSELCDSFPGQELDRRPLHDLCKTTITSSHHSSKTISSLSP. The N-linked (GlcNAc...) asparagine glycan is linked to N6. The helical transmembrane segment at 48–68 threads the bilayer; sequence VLLGIVWTFLSCGLLLILFFL. At 69–86 the chain is on the cytoplasmic side; the sequence is AFTIHCRKNRIVKMSSPN. Residues 87–107 traverse the membrane as a helical segment; it reads LNIVTLLGSCLTYSSAYLFGI. At 108 to 118 the chain is on the extracellular side; it reads QDVLVGSSMET. The helical transmembrane segment at 119–139 threads the bilayer; it reads LIQTRLSMLCIGTSLVFGPIL. The Cytoplasmic segment spans residues 140–164; that stretch reads GKSWRLYKVFTQRVPDKRVIIKDLQ. Residues 165–185 traverse the membrane as a helical segment; that stretch reads LLGLVAALLMADVILLMTWVL. Residues 186–222 lie on the Extracellular side of the membrane; that stretch reads TDPIQCLQILSVSMTVTGKDVSCTSTSTHFCASRYSD. Residues 223-243 form a helical membrane-spanning segment; that stretch reads VWIALIWGCKGLLLLYGAYLA. At 244–257 the chain is on the cytoplasmic side; the sequence is GLTGHVSSPPVNQS. A helical membrane pass occupies residues 258–278; that stretch reads LTIMVGVNLLVLAAGLLFVVT. The Extracellular portion of the chain corresponds to 279 to 288; it reads RYLHSWPNLV. A helical transmembrane segment spans residues 289 to 309; sequence FGLTSGGIFVCTTTINCFIFI. Topologically, residues 310-814 are cytoplasmic; it reads PQLKQWKAFE…FKDDLKPTLV (505 aa). Residues 354–390 are a coiled coil; it reads EKSSMERLLTEKNAVIESLQEQVNNAKEKIVRLMSAE. Disordered regions lie at residues 422 to 545, 557 to 724, and 769 to 792; these read AQGP…SSVI, GLGP…PEQW, and SSSD…LASW. Polar residues predominate over residues 443–454; it reads SQCTSGPSSYAQ. Basic and acidic residues predominate over residues 468–484; that stretch reads GKEEKISDSKDFSDHLD. Over residues 486–496 the composition is skewed to polar residues; that stretch reads GCSQKPWTEQS. Basic and acidic residues predominate over residues 523–545; that stretch reads QRQRHLENSEEPPERRSRVSSVI. The segment covering 563-581 has biased composition (polar residues); sequence SLSTAPSCHQQTWKNSAAF. Residues 599–610 are compositionally biased toward basic residues; that stretch reads VRRRRAAQRARS. Polar residues predominate over residues 639–651; it reads NGDSPSLAPQTTD. Over residues 769–780 the composition is skewed to low complexity; the sequence is SSSDSSDSGTSD.

It belongs to the G-protein coupled receptor 3 family. GABA-B receptor subfamily. Ubiquitous expression both in the CNS and in peripheral tissues. Very high expression in fetal brain and testis relative to expression in other tissues.

It is found in the cell membrane. Orphan G-protein coupled receptor involved in the regulation of hair cell orientation in mechanosensory organs of the inner ear. It is required to trigger a 180 degree reversal in hair cell orientation, creating a virtual line of polarity reversal (LPR) across which stereociliary bundles are arranged in opposite orientations. In Homo sapiens (Human), this protein is Probable G-protein coupled receptor 156 (GPR156).